Reading from the N-terminus, the 66-residue chain is uncharacterized protein (66 aa).

The protein to M.jannaschii MJ0582.

This is an uncharacterized protein from Methanocaldococcus jannaschii (strain ATCC 43067 / DSM 2661 / JAL-1 / JCM 10045 / NBRC 100440) (Methanococcus jannaschii).